Here is a 369-residue protein sequence, read N- to C-terminus: Endoglucanase (369 aa).

A signal peptide spans 1 to 22 (MMTMLRGWITMIVMLTAINAQA). Glutamate 56 serves as the catalytic Proton donor. The Nucleophile role is filled by aspartate 117.

The protein belongs to the glycosyl hydrolase 8 (cellulase D) family.

The protein localises to the secreted. It carries out the reaction Endohydrolysis of (1-&gt;4)-beta-D-glucosidic linkages in cellulose, lichenin and cereal beta-D-glucans.. Its pathway is glycan metabolism; bacterial cellulose biosynthesis. In terms of biological role, hydrolyzes carboxymethylcellulose. The protein is Endoglucanase (bcsZ) of Salmonella typhi.